The following is a 428-amino-acid chain: Serine--tRNA ligase (428 aa).

L-serine is bound at residue 231-233 (TAE). Residue 262–264 (RSE) participates in ATP binding. An L-serine-binding site is contributed by Glu-285. 349 to 352 (EISS) lines the ATP pocket. Position 385 (Ser-385) interacts with L-serine.

This sequence belongs to the class-II aminoacyl-tRNA synthetase family. Type-1 seryl-tRNA synthetase subfamily. As to quaternary structure, homodimer. The tRNA molecule binds across the dimer.

Its subcellular location is the cytoplasm. The enzyme catalyses tRNA(Ser) + L-serine + ATP = L-seryl-tRNA(Ser) + AMP + diphosphate + H(+). The catalysed reaction is tRNA(Sec) + L-serine + ATP = L-seryl-tRNA(Sec) + AMP + diphosphate + H(+). Its pathway is aminoacyl-tRNA biosynthesis; selenocysteinyl-tRNA(Sec) biosynthesis; L-seryl-tRNA(Sec) from L-serine and tRNA(Sec): step 1/1. In terms of biological role, catalyzes the attachment of serine to tRNA(Ser). Is also able to aminoacylate tRNA(Sec) with serine, to form the misacylated tRNA L-seryl-tRNA(Sec), which will be further converted into selenocysteinyl-tRNA(Sec). In Staphylococcus aureus (strain bovine RF122 / ET3-1), this protein is Serine--tRNA ligase.